We begin with the raw amino-acid sequence, 237 residues long: Large ribosomal subunit protein uL1 (237 aa).

This sequence belongs to the universal ribosomal protein uL1 family. In terms of assembly, part of the 50S ribosomal subunit.

Binds directly to 23S rRNA. The L1 stalk is quite mobile in the ribosome, and is involved in E site tRNA release. Its function is as follows. Protein L1 is also a translational repressor protein, it controls the translation of the L11 operon by binding to its mRNA. The chain is Large ribosomal subunit protein uL1 from Chloroflexus aurantiacus (strain ATCC 29364 / DSM 637 / Y-400-fl).